Consider the following 310-residue polypeptide: Olfactory receptor 4C16 (310 aa).

The Extracellular portion of the chain corresponds to 1–23 (MQLNNNVTEFILLGLTQDPFWKK). N-linked (GlcNAc...) asparagine glycosylation is present at Asn-6. The chain crosses the membrane as a helical span at residues 24-47 (IVFVIFLRLYLGTLLGNLLIIISV). Residues 48-55 (KTSQALKN) lie on the Cytoplasmic side of the membrane. Residues 56-77 (PMFFFLFYLSLSDTCLSTSITP) form a helical membrane-spanning segment. The Extracellular portion of the chain corresponds to 78–98 (RMIVDALLKKTTISFSECMIQ). Residues Cys-95 and Cys-187 are joined by a disulfide bond. The chain crosses the membrane as a helical span at residues 99-118 (VFSSHVFGCLEIFILILTAV). Over 119–137 (DRYVDICKPLHYMTIISQW) the chain is Cytoplasmic. Residues 138–156 (VCGVLMAVAWVGSCVHSLV) form a helical membrane-spanning segment. At 157–193 (QIFLALSLPFCGPNVINHCFCDLQPLLKQACSETYVV) the chain is on the extracellular side. The helical transmembrane segment at 194-217 (NLLLVSNSGAICAVSYVMLIFSYV) threads the bilayer. At 218 to 233 (IFLHSLRNHSAEVIKK) the chain is on the cytoplasmic side. The helical transmembrane segment at 234-256 (ALSTCVSHIIVVILFFGPCIFMY) threads the bilayer. The Extracellular portion of the chain corresponds to 257–267 (TCLATVFPMDK). Residues 268 to 287 (MIAVFYTVGTSFLNPVIYTL) form a helical membrane-spanning segment. At 288–310 (KNTEVKSAMRKLWSKKLITDDKR) the chain is on the cytoplasmic side.

This sequence belongs to the G-protein coupled receptor 1 family.

The protein resides in the cell membrane. Functionally, odorant receptor. This chain is Olfactory receptor 4C16 (OR4C16), found in Homo sapiens (Human).